The sequence spans 295 residues: Nuclear transcription factor Y subunit A-2 (295 aa).

The short motif at 139–165 (YVNSKQYHGIIRRRQSRAKAAAVLDQK) is the Subunit association domain (SAD) element. The NFYA/HAP2-type DNA-binding region spans 173-198 (KPYMHHSRHLHALRRPRGSGGRFLNT). Residues 178–189 (HSRHLHALRRPR) show a composition bias toward basic residues. The interval 178-244 (HSRHLHALRR…VVHPENGTMN (67 aa)) is disordered. Polar residues predominate over residues 197–209 (NTKSQNLENSGTN). The span at 216-233 (SMQIQSQPKPQQSNSQNS) shows a compositional bias: low complexity.

The protein belongs to the NFYA/HAP2 subunit family. Heterotrimeric transcription factor composed of three components, NF-YA, NF-YB and NF-YC. NF-YB and NF-YC must interact and dimerize for NF-YA association and DNA binding. Component of a heat stress-inducible transcriptional complex with NF-YA and NF-YB subunits made, at least, of NFYA2, NFYB3 and DPB3-1 in cooperation with DREB2A. In terms of tissue distribution, ubiquitous. Expressed in seedlings, roots, petioles, hypocotyls, reproductive organ tissues and leaves.

It localises to the nucleus. Its function is as follows. Stimulates the transcription of various genes by recognizing and binding to a CCAAT motif in promoters. Promotes the expression of heat stress-inducible genes by contributing to the formation of a heat stress-specific transcriptional complex with NF-Y subunits (e.g. DPB3-1, NF-YA2 and NF-YB3) and DREB2A at the promoter of target genes, thus promoting heat tolerance. The polypeptide is Nuclear transcription factor Y subunit A-2 (Arabidopsis thaliana (Mouse-ear cress)).